Here is a 176-residue protein sequence, read N- to C-terminus: Large ribosomal subunit protein uL10 (176 aa).

The protein belongs to the universal ribosomal protein uL10 family. In terms of assembly, part of the ribosomal stalk of the 50S ribosomal subunit. The N-terminus interacts with L11 and the large rRNA to form the base of the stalk. The C-terminus forms an elongated spine to which L12 dimers bind in a sequential fashion forming a multimeric L10(L12)X complex.

In terms of biological role, forms part of the ribosomal stalk, playing a central role in the interaction of the ribosome with GTP-bound translation factors. In Alcanivorax borkumensis (strain ATCC 700651 / DSM 11573 / NCIMB 13689 / SK2), this protein is Large ribosomal subunit protein uL10.